Reading from the N-terminus, the 146-residue chain is Ribonuclease P protein component (146 aa).

Belongs to the RnpA family. Consists of a catalytic RNA component (M1 or rnpB) and a protein subunit.

It catalyses the reaction Endonucleolytic cleavage of RNA, removing 5'-extranucleotides from tRNA precursor.. Its function is as follows. RNaseP catalyzes the removal of the 5'-leader sequence from pre-tRNA to produce the mature 5'-terminus. It can also cleave other RNA substrates such as 4.5S RNA. The protein component plays an auxiliary but essential role in vivo by binding to the 5'-leader sequence and broadening the substrate specificity of the ribozyme. This is Ribonuclease P protein component from Chlorobium phaeobacteroides (strain DSM 266 / SMG 266 / 2430).